The primary structure comprises 283 residues: Bifunctional protein FolD 2 (283 aa).

Residues 165–167 (GRG), threonine 192, and valine 233 each bind NADP(+).

It belongs to the tetrahydrofolate dehydrogenase/cyclohydrolase family. As to quaternary structure, homodimer.

It catalyses the reaction (6R)-5,10-methylene-5,6,7,8-tetrahydrofolate + NADP(+) = (6R)-5,10-methenyltetrahydrofolate + NADPH. The catalysed reaction is (6R)-5,10-methenyltetrahydrofolate + H2O = (6R)-10-formyltetrahydrofolate + H(+). Its pathway is one-carbon metabolism; tetrahydrofolate interconversion. Functionally, catalyzes the oxidation of 5,10-methylenetetrahydrofolate to 5,10-methenyltetrahydrofolate and then the hydrolysis of 5,10-methenyltetrahydrofolate to 10-formyltetrahydrofolate. The chain is Bifunctional protein FolD 2 from Saccharopolyspora erythraea (strain ATCC 11635 / DSM 40517 / JCM 4748 / NBRC 13426 / NCIMB 8594 / NRRL 2338).